We begin with the raw amino-acid sequence, 143 residues long: Lutropin subunit beta (143 aa).

Residues 1–22 (MEMLQGLLLLWLLLLNVGGVWT) form the signal peptide. Cystine bridges form between cysteine 31/cysteine 79, cysteine 45/cysteine 94, cysteine 48/cysteine 132, cysteine 56/cysteine 110, cysteine 60/cysteine 112, and cysteine 115/cysteine 122. N-linked (GlcNAc...) asparagine glycosylation occurs at asparagine 35.

Belongs to the glycoprotein hormones subunit beta family. Heterodimer of a common alpha chain and a unique beta chain which confers biological specificity to thyrotropin, lutropin, follitropin and gonadotropin.

Its subcellular location is the secreted. Its function is as follows. Promotes spermatogenesis and ovulation by stimulating the testes and ovaries to synthesize steroids. This chain is Lutropin subunit beta (LHB), found in Felis catus (Cat).